Consider the following 219-residue polypeptide: 2-C-methyl-D-erythritol 4-phosphate cytidylyltransferase (219 aa).

It belongs to the IspD/TarI cytidylyltransferase family. IspD subfamily.

The catalysed reaction is 2-C-methyl-D-erythritol 4-phosphate + CTP + H(+) = 4-CDP-2-C-methyl-D-erythritol + diphosphate. It functions in the pathway isoprenoid biosynthesis; isopentenyl diphosphate biosynthesis via DXP pathway; isopentenyl diphosphate from 1-deoxy-D-xylulose 5-phosphate: step 2/6. Catalyzes the formation of 4-diphosphocytidyl-2-C-methyl-D-erythritol from CTP and 2-C-methyl-D-erythritol 4-phosphate (MEP). The protein is 2-C-methyl-D-erythritol 4-phosphate cytidylyltransferase of Chlamydia trachomatis serovar L2 (strain ATCC VR-902B / DSM 19102 / 434/Bu).